The sequence spans 31 residues: Photosystem II reaction center protein M (31 aa).

A helical membrane pass occupies residues isoleucine 5–isoleucine 25.

The protein belongs to the PsbM family. PSII is composed of 1 copy each of membrane proteins PsbA, PsbB, PsbC, PsbD, PsbE, PsbF, PsbH, PsbI, PsbJ, PsbK, PsbL, PsbM, PsbT, PsbX, PsbY, PsbZ, Psb30/Ycf12, at least 3 peripheral proteins of the oxygen-evolving complex and a large number of cofactors. It forms dimeric complexes.

The protein resides in the plastid membrane. Functionally, one of the components of the core complex of photosystem II (PSII). PSII is a light-driven water:plastoquinone oxidoreductase that uses light energy to abstract electrons from H(2)O, generating O(2) and a proton gradient subsequently used for ATP formation. It consists of a core antenna complex that captures photons, and an electron transfer chain that converts photonic excitation into a charge separation. This subunit is found at the monomer-monomer interface. The polypeptide is Photosystem II reaction center protein M (Cuscuta reflexa (Southern Asian dodder)).